The chain runs to 548 residues: DNA ligase (548 aa).

E196 contributes to the ATP binding site. K198 functions as the N6-AMP-lysine intermediate in the catalytic mechanism. The ATP site is built by R203, R218, E250, and F284. An a divalent metal cation-binding site is contributed by E250. E345 is an a divalent metal cation binding site. ATP contacts are provided by R361 and K365. Residues 515-548 (EQLIRNSQENTKKTFARLATTYDGPSPNKKLKLN) are disordered.

It belongs to the ATP-dependent DNA ligase family. A divalent metal cation is required as a cofactor.

It carries out the reaction ATP + (deoxyribonucleotide)n-3'-hydroxyl + 5'-phospho-(deoxyribonucleotide)m = (deoxyribonucleotide)n+m + AMP + diphosphate.. In terms of biological role, able to ligate a double-stranded synthetic DNA substrate containing a single nick and inefficiently ligated a 1 nucleotide gap but did not ligate a 2 nucleotide gap. It is able to ligate short, complementary overhangs but not blunt-ended double-stranded DNA. May be implicated in DNA repair and recombination. This is DNA ligase (LIG) from Lepidoptera (butterflies and moths).